We begin with the raw amino-acid sequence, 584 residues long: Arginine--tRNA ligase (584 aa).

The short motif at 127–137 (PNTNKPLHIGH) is the 'HIGH' region element.

Belongs to the class-I aminoacyl-tRNA synthetase family. In terms of assembly, monomer.

It is found in the cytoplasm. The catalysed reaction is tRNA(Arg) + L-arginine + ATP = L-arginyl-tRNA(Arg) + AMP + diphosphate. The protein is Arginine--tRNA ligase of Borrelia hermsii (strain HS1 / DAH).